The following is a 237-amino-acid chain: Demethylmenaquinone methyltransferase (237 aa).

Residues T58, D79, and 107-108 (NA) each bind S-adenosyl-L-methionine.

The protein belongs to the class I-like SAM-binding methyltransferase superfamily. MenG/UbiE family.

The enzyme catalyses a 2-demethylmenaquinol + S-adenosyl-L-methionine = a menaquinol + S-adenosyl-L-homocysteine + H(+). It participates in quinol/quinone metabolism; menaquinone biosynthesis; menaquinol from 1,4-dihydroxy-2-naphthoate: step 2/2. Functionally, methyltransferase required for the conversion of demethylmenaquinol (DMKH2) to menaquinol (MKH2). This Lactiplantibacillus plantarum (strain ATCC BAA-793 / NCIMB 8826 / WCFS1) (Lactobacillus plantarum) protein is Demethylmenaquinone methyltransferase.